A 234-amino-acid polypeptide reads, in one-letter code: Iron-sulfur cluster co-chaperone protein HscB (234 aa).

A divalent metal cation is bound by residues C40, C43, C57, and C60. Positions 71 to 143 constitute a J domain; it reads DYFSLMNCNR…LTRGLYLLKL (73 aa).

The protein belongs to the HscB family. As to quaternary structure, interacts with ISCU and HSPA9 to form an iron-sulfur transfer complex. Interacts with SDHAF1 (via the first LYR motif); the interaction recruits the iron-sulfur transfer complex composed of HSC20, HSPA9 and ISCU and mediates the incorporation of iron-sulfur clusters into SDHB which also interacts with HSC20. Interacts with the cytoplasmic form of ISCU and with CIA complex member CIAO1 (via LYR motif). In terms of assembly, homodimer. Interacts with ISCU (cytoplasmic form); this interaction stabilizes the (Fe-S) clusters on ISCU. Interacts with the CIA complex member CIAO1 (via LYR motif).

The protein localises to the cytoplasm. It is found in the mitochondrion. The protein operates within cofactor biosynthesis; iron-sulfur cluster biosynthesis. In terms of biological role, acts as a co-chaperone in iron-sulfur cluster assembly in mitochondria. Required for incorporation of iron-sulfur clusters into SDHB, the iron-sulfur protein subunit of succinate dehydrogenase that is involved in complex II of the mitochondrial electron transport chain. Recruited to SDHB by interaction with SDHAF1 which first binds SDHB and then recruits the iron-sulfur transfer complex formed by HSC20, HSPA9 and ISCU through direct binding to HSC20. Plays an essential role in hematopoiesis. Acts as a co-chaperone in iron-sulfur cluster assembly in the cytoplasm. Also mediates complex formation between components of the cytosolic iron-sulfur biogenesis pathway and the CIA targeting complex composed of CIAO1, DIPK1B/FAM69B and MMS19 by binding directly to the scaffold protein ISCU and to CIAO1. This facilitates iron-sulfur cluster insertion into a number of cytoplasmic and nuclear proteins including POLD1, ELP3, DPYD and PPAT. The sequence is that of Iron-sulfur cluster co-chaperone protein HscB from Mus musculus (Mouse).